We begin with the raw amino-acid sequence, 372 residues long: Phospho-N-acetylmuramoyl-pentapeptide-transferase (372 aa).

Helical transmembrane passes span 21-41, 71-91, 98-118, 134-154, 176-196, 211-231, 251-271, 275-295, 300-320, and 349-369; these read SLTLRALLAVITALAFSMIFG, TPTMGGVLILSAIGVSTLLWA, VWILLIVMIIFGAVGWADDWL, YFWLSMGALFVGISLYYIATL, MIPFSAVPFGIGFIIFTYFVI, GLAILPVVLVAAGLGAMAYVS, VIIVCGAMIGAGLGFLWFNAH, VFMGDVGALSLGAMLGTIAVM, IAFAIMGGLFVAEALSVMLQV, and QVVARFWIIAIILVILGLMTL.

The protein belongs to the glycosyltransferase 4 family. MraY subfamily. It depends on Mg(2+) as a cofactor.

Its subcellular location is the cell inner membrane. The catalysed reaction is UDP-N-acetyl-alpha-D-muramoyl-L-alanyl-gamma-D-glutamyl-meso-2,6-diaminopimeloyl-D-alanyl-D-alanine + di-trans,octa-cis-undecaprenyl phosphate = di-trans,octa-cis-undecaprenyl diphospho-N-acetyl-alpha-D-muramoyl-L-alanyl-D-glutamyl-meso-2,6-diaminopimeloyl-D-alanyl-D-alanine + UMP. It participates in cell wall biogenesis; peptidoglycan biosynthesis. Catalyzes the initial step of the lipid cycle reactions in the biosynthesis of the cell wall peptidoglycan: transfers peptidoglycan precursor phospho-MurNAc-pentapeptide from UDP-MurNAc-pentapeptide onto the lipid carrier undecaprenyl phosphate, yielding undecaprenyl-pyrophosphoryl-MurNAc-pentapeptide, known as lipid I. The protein is Phospho-N-acetylmuramoyl-pentapeptide-transferase of Psychrobacter arcticus (strain DSM 17307 / VKM B-2377 / 273-4).